The sequence spans 97 residues: Cytochrome c2 iso-2 (97 aa).

Positions 10, 13, 14, and 75 each coordinate heme c.

Belongs to the cytochrome c family. Post-translationally, binds 1 heme c group covalently per subunit.

In terms of biological role, cytochrome c2 is found mainly in purple, non-sulfur, photosynthetic bacteria where it functions as the electron donor to the oxidized bacteriochlorophyll in the photophosphorylation pathway. However, it may also have a role in the respiratory chain and is found in some non-photosynthetic bacteria. This Magnetospirillum molischianum (Rhodospirillum molischianum) protein is Cytochrome c2 iso-2.